We begin with the raw amino-acid sequence, 318 residues long: Beta-ketoacyl-[acyl-carrier-protein] synthase III (318 aa).

Catalysis depends on residues Cys-112 and His-245. Residues 246–250 (QANIR) form an ACP-binding region. Residue Asn-275 is part of the active site.

It belongs to the thiolase-like superfamily. FabH family. Homodimer.

It is found in the cytoplasm. It catalyses the reaction malonyl-[ACP] + acetyl-CoA + H(+) = 3-oxobutanoyl-[ACP] + CO2 + CoA. It participates in lipid metabolism; fatty acid biosynthesis. Functionally, catalyzes the condensation reaction of fatty acid synthesis by the addition to an acyl acceptor of two carbons from malonyl-ACP. Catalyzes the first condensation reaction which initiates fatty acid synthesis and may therefore play a role in governing the total rate of fatty acid production. Possesses both acetoacetyl-ACP synthase and acetyl transacylase activities. Its substrate specificity determines the biosynthesis of branched-chain and/or straight-chain of fatty acids. This Rickettsia conorii (strain ATCC VR-613 / Malish 7) protein is Beta-ketoacyl-[acyl-carrier-protein] synthase III.